Here is a 290-residue protein sequence, read N- to C-terminus: 4-hydroxy-3-methylbut-2-enyl diphosphate reductase (290 aa).

Residue Cys-12 participates in [4Fe-4S] cluster binding. Residues His-50 and His-83 each coordinate (2E)-4-hydroxy-3-methylbut-2-enyl diphosphate. Dimethylallyl diphosphate is bound by residues His-50 and His-83. His-50 and His-83 together coordinate isopentenyl diphosphate. Cys-105 is a binding site for [4Fe-4S] cluster. His-133 lines the (2E)-4-hydroxy-3-methylbut-2-enyl diphosphate pocket. His-133 contributes to the dimethylallyl diphosphate binding site. His-133 is a binding site for isopentenyl diphosphate. Glu-135 (proton donor) is an active-site residue. Residue Thr-173 coordinates (2E)-4-hydroxy-3-methylbut-2-enyl diphosphate. Cys-202 provides a ligand contact to [4Fe-4S] cluster. Positions 230, 232, and 274 each coordinate (2E)-4-hydroxy-3-methylbut-2-enyl diphosphate. Positions 230, 232, and 274 each coordinate dimethylallyl diphosphate. Positions 230, 232, and 274 each coordinate isopentenyl diphosphate.

The protein belongs to the IspH family. It depends on [4Fe-4S] cluster as a cofactor.

It catalyses the reaction isopentenyl diphosphate + 2 oxidized [2Fe-2S]-[ferredoxin] + H2O = (2E)-4-hydroxy-3-methylbut-2-enyl diphosphate + 2 reduced [2Fe-2S]-[ferredoxin] + 2 H(+). It carries out the reaction dimethylallyl diphosphate + 2 oxidized [2Fe-2S]-[ferredoxin] + H2O = (2E)-4-hydroxy-3-methylbut-2-enyl diphosphate + 2 reduced [2Fe-2S]-[ferredoxin] + 2 H(+). Its pathway is isoprenoid biosynthesis; dimethylallyl diphosphate biosynthesis; dimethylallyl diphosphate from (2E)-4-hydroxy-3-methylbutenyl diphosphate: step 1/1. It functions in the pathway isoprenoid biosynthesis; isopentenyl diphosphate biosynthesis via DXP pathway; isopentenyl diphosphate from 1-deoxy-D-xylulose 5-phosphate: step 6/6. Functionally, catalyzes the conversion of 1-hydroxy-2-methyl-2-(E)-butenyl 4-diphosphate (HMBPP) into a mixture of isopentenyl diphosphate (IPP) and dimethylallyl diphosphate (DMAPP). Acts in the terminal step of the DOXP/MEP pathway for isoprenoid precursor biosynthesis. The protein is 4-hydroxy-3-methylbut-2-enyl diphosphate reductase of Nitratidesulfovibrio vulgaris (strain ATCC 29579 / DSM 644 / CCUG 34227 / NCIMB 8303 / VKM B-1760 / Hildenborough) (Desulfovibrio vulgaris).